Reading from the N-terminus, the 672-residue chain is UvrABC system protein B (672 aa).

In terms of domain architecture, Helicase ATP-binding spans 26 to 181; the sequence is AGLEDGLAYQ…ILQRLAELQY (156 aa). Residue 39–46 coordinates ATP; the sequence is GVTGSGKT. Residues 92-115 carry the Beta-hairpin motif; it reads YYDYYQPEAYVPSSDTYIEKDASI. One can recognise a Helicase C-terminal domain in the interval 430–592; that stretch reads QVDDLLSEIK…ITPKSIQKAV (163 aa). The UVR domain maps to 631–666; it reads AKELRKLEEQMYHHARNLEFEEAAAVRDKIQHIRKG.

This sequence belongs to the UvrB family. In terms of assembly, forms a heterotetramer with UvrA during the search for lesions. Interacts with UvrC in an incision complex.

The protein localises to the cytoplasm. The UvrABC repair system catalyzes the recognition and processing of DNA lesions. A damage recognition complex composed of 2 UvrA and 2 UvrB subunits scans DNA for abnormalities. Upon binding of the UvrA(2)B(2) complex to a putative damaged site, the DNA wraps around one UvrB monomer. DNA wrap is dependent on ATP binding by UvrB and probably causes local melting of the DNA helix, facilitating insertion of UvrB beta-hairpin between the DNA strands. Then UvrB probes one DNA strand for the presence of a lesion. If a lesion is found the UvrA subunits dissociate and the UvrB-DNA preincision complex is formed. This complex is subsequently bound by UvrC and the second UvrB is released. If no lesion is found, the DNA wraps around the other UvrB subunit that will check the other stand for damage. In Coxiella burnetii (strain Dugway 5J108-111), this protein is UvrABC system protein B.